Consider the following 433-residue polypeptide: Xylose isomerase (433 aa).

Active-site residues include H99 and D102. Mg(2+)-binding residues include E230, E266, H269, D294, D305, D307, and D337.

This sequence belongs to the xylose isomerase family. Homotetramer. The cofactor is Mg(2+).

It is found in the cytoplasm. It catalyses the reaction alpha-D-xylose = alpha-D-xylulofuranose. In Cereibacter sphaeroides (strain ATCC 17025 / ATH 2.4.3) (Rhodobacter sphaeroides), this protein is Xylose isomerase.